Consider the following 257-residue polypeptide: Dihydroorotate dehydrogenase B (NAD(+)), electron transfer subunit (257 aa).

In terms of domain architecture, FAD-binding FR-type spans 2-102; that stretch reads IGRERMTVAS…LGPLGNGFPL (101 aa). Residues 53–56, 70–72, and 77–78 each bind FAD; these read RPLS, IYR, and GT. Residues Cys-221, Cys-226, Cys-229, and Cys-244 each coordinate [2Fe-2S] cluster.

Belongs to the PyrK family. As to quaternary structure, heterotetramer of 2 PyrK and 2 PyrD type B subunits. It depends on [2Fe-2S] cluster as a cofactor. FAD is required as a cofactor.

Its pathway is pyrimidine metabolism; UMP biosynthesis via de novo pathway; orotate from (S)-dihydroorotate (NAD(+) route): step 1/1. In terms of biological role, responsible for channeling the electrons from the oxidation of dihydroorotate from the FMN redox center in the PyrD type B subunit to the ultimate electron acceptor NAD(+). This chain is Dihydroorotate dehydrogenase B (NAD(+)), electron transfer subunit, found in Bacillus caldolyticus.